Here is a 318-residue protein sequence, read N- to C-terminus: L-lactate dehydrogenase (318 aa).

3 residues coordinate NAD(+): Val-16, Asp-37, and Tyr-68. Substrate contacts are provided by residues Gln-85, Arg-91, and 123 to 126; that span reads NPVD. Residues 121 to 123 and Ser-146 each bind NAD(+); that span reads VAN. 151-154 serves as a coordination point for substrate; it reads DSAR. The active-site Proton acceptor is His-178. Tyr-222 carries the phosphotyrosine modification. Substrate is bound at residue Thr-231.

It belongs to the LDH/MDH superfamily. LDH family. In terms of assembly, homotetramer.

The protein localises to the cytoplasm. It carries out the reaction (S)-lactate + NAD(+) = pyruvate + NADH + H(+). The protein operates within fermentation; pyruvate fermentation to lactate; (S)-lactate from pyruvate: step 1/1. In terms of biological role, catalyzes the conversion of lactate to pyruvate. The chain is L-lactate dehydrogenase from Mycoplasma mobile (strain ATCC 43663 / 163K / NCTC 11711) (Mesomycoplasma mobile).